The chain runs to 332 residues: Cell division protein ZipA (332 aa).

Over 1 to 6 (MMQDLR) the chain is Periplasmic. Residues 7-27 (LILIVVGAIAIIALLLHGLWT) form a helical membrane-spanning segment. The Cytoplasmic portion of the chain corresponds to 28–332 (SRKERSSLFR…RLREVLENNA (305 aa)). Basic and acidic residues-rich tracts occupy residues 34–51 (SLFR…REQS) and 61–72 (GEVRVRSAHPED). The tract at residues 34–184 (SLFRDRPAKR…PAVAHEPQPA (151 aa)) is disordered. The span at 98-107 (PAPRAVQPAA) shows a compositional bias: low complexity. Residues 121 to 136 (DDILLDNYAQEEDDEP) are compositionally biased toward acidic residues. The segment covering 155–171 (PAAEPAFHAEPAHQPQP) has biased composition (low complexity).

The protein belongs to the ZipA family. In terms of assembly, interacts with FtsZ via their C-terminal domains.

It is found in the cell inner membrane. Essential cell division protein that stabilizes the FtsZ protofilaments by cross-linking them and that serves as a cytoplasmic membrane anchor for the Z ring. Also required for the recruitment to the septal ring of downstream cell division proteins. The polypeptide is Cell division protein ZipA (Serratia proteamaculans (strain 568)).